The chain runs to 265 residues: Probable esterase tazC (265 aa).

Residues serine 119, aspartate 209, and histidine 236 each act as charge relay system in the active site.

The protein belongs to the LovG family.

The protein operates within secondary metabolite biosynthesis. In terms of biological role, probable esterase; part of the gene cluster that mediates the biosynthesis of azaterrilone A and other azaphilones, a class of fungal metabolites characterized by a highly oxygenated pyrano-quinone bicyclic core and exhibiting a broad range of bioactivities. The first step of the pathway begins with the non-reducing polyketide synthase tazA that assembles one acetyl-CoA starter unit, five malonyl-CoA units, and catalyzes a series of Claisen condensations, methylation, PT-mediated cyclization, and finally releases the first hexaketide precursor through the R-domain. The tazA product then undergoes reduction on its terminal ketone and the following pyran-ring formation by yet undetermined enzyme(s). Dehydration and enoyl reduction, possibly involving the trans-enoyl reductase tazE leads to the next intermediate. TazD is predicted as an acetyltransferase and might catalyze the acetylation steps leading to the synthesis of azaterrilone A. Azaterrilone A is not the final product of the taz pathway and both the highly reducing polyketide synthase tazB and the dual enzyme tazHJ catalyze late steps of the pathway, leading to the production of the 2 final stereoisomers that contain additional polyketide modification whose structures have still to be determined. This chain is Probable esterase tazC, found in Aspergillus terreus (strain NIH 2624 / FGSC A1156).